The chain runs to 156 residues: Snaclec A15 (156 aa).

The signal sequence occupies residues 1–23 (MGRFIFVRFGLLVVFLSLSGTGA). Disulfide bonds link Cys-27–Cys-38, Cys-55–Cys-152, and Cys-127–Cys-144. The C-type lectin domain occupies 34–153 (YDQHCYKAFD…CGDDYPFVCK (120 aa)). A glycan (N-linked (GlcNAc...) asparagine) is linked at Asn-141.

Belongs to the snaclec family. Heterodimer; disulfide-linked. In terms of tissue distribution, expressed by the venom gland.

It is found in the secreted. Its function is as follows. Interferes with one step of hemostasis (modulation of platelet aggregation, or coagulation cascade, for example). This is Snaclec A15 from Macrovipera lebetinus (Levantine viper).